The sequence spans 381 residues: Succinyl-diaminopimelate desuccinylase (381 aa).

Position 68 (histidine 68) interacts with Zn(2+). The active site involves aspartate 70. Aspartate 101 is a Zn(2+) binding site. Glutamate 135 (proton acceptor) is an active-site residue. Positions 136, 164, and 350 each coordinate Zn(2+).

The protein belongs to the peptidase M20A family. DapE subfamily. As to quaternary structure, homodimer. The cofactor is Zn(2+). Co(2+) serves as cofactor.

The catalysed reaction is N-succinyl-(2S,6S)-2,6-diaminopimelate + H2O = (2S,6S)-2,6-diaminopimelate + succinate. It participates in amino-acid biosynthesis; L-lysine biosynthesis via DAP pathway; LL-2,6-diaminopimelate from (S)-tetrahydrodipicolinate (succinylase route): step 3/3. Its function is as follows. Catalyzes the hydrolysis of N-succinyl-L,L-diaminopimelic acid (SDAP), forming succinate and LL-2,6-diaminopimelate (DAP), an intermediate involved in the bacterial biosynthesis of lysine and meso-diaminopimelic acid, an essential component of bacterial cell walls. This is Succinyl-diaminopimelate desuccinylase from Neisseria meningitidis serogroup C (strain 053442).